The chain runs to 503 residues: Annexin A11 (503 aa).

Composition is skewed to pro residues over residues Met1–Pro17, Gly80–Gly145, and Ser155–Pro169. Disordered stretches follow at residues Met1–Ile35 and Ala56–Thr178. Annexin repeat units follow at residues Phe198 to Lys269, Thr270 to Gln341, Ser353 to Lys425, and Asn429 to Gly500. N6-acetyllysine is present on residues Lys246 and Lys253. The residue at position 477 (Lys477) is an N6-acetyllysine.

Belongs to the annexin family. In terms of assembly, interacts with PDCD6 in a calcium-dependent manner. Interacts with KIF23 during cytokinesis. Interacts with S100A6.

The protein resides in the cytoplasm. It is found in the melanosome. Its subcellular location is the nucleus envelope. It localises to the nucleus. The protein localises to the nucleoplasm. The protein resides in the cytoskeleton. It is found in the spindle. Functionally, required for midbody formation and completion of the terminal phase of cytokinesis. Binds specifically to calcyclin in a calcium-dependent manner. This chain is Annexin A11 (ANXA11), found in Oryctolagus cuniculus (Rabbit).